Reading from the N-terminus, the 877-residue chain is Leucine--tRNA ligase (877 aa).

The short motif at 43-53 (PYPSGRIHMGH) is the 'HIGH' region element. The 'KMSKS' region signature appears at 628 to 632 (KMSKS). ATP is bound at residue K631.

Belongs to the class-I aminoacyl-tRNA synthetase family.

It localises to the cytoplasm. The enzyme catalyses tRNA(Leu) + L-leucine + ATP = L-leucyl-tRNA(Leu) + AMP + diphosphate. The polypeptide is Leucine--tRNA ligase (Brucella canis (strain ATCC 23365 / NCTC 10854 / RM-666)).